The following is a 454-amino-acid chain: MSMVIGIGDLLVGYYWQWRDESQVEGKFMFYRAAKKTTPVKYQYTSNLSRCFLVFGIEPKPNKSGNFNNTMPDTEHSGDTTVNQVETIVTTVVVEQQVPTLVALDSLINENLKLASASQSSGWGFAHGLLVGQLSVVAVLAFFIKFFIFGNSSMARPLMVAPLINRKPAGVYKKGRAKSFSEVEDYDSETSSTQILDKTYYDVKTHQSESLDWFNVLVAQSIAQFRYEALNNDNIYHSLSDALSSSNLPDYLDKITITEINIGDDFPIFSNCRIKHSPNNSNRLEAKIDVDVADTLTLGIETQLLLNQPKPFTAVLPVQLSVSIVRFSACLTVSLISTADEEFQSSIKCVEDSENAIGDYEDDDDEFGGGAALMFSFSPDFRLEFEVKSLIGARSKLENVPLIGNLIEEKLKSWFLERCVEPRFQLIELPSMWPRKKNTRKPVDSESETAVDSN.

Topologically, residues 1 to 128 are lumenal; sequence MSMVIGIGDL…QSSGWGFAHG (128 aa). The helical transmembrane segment at 129-149 threads the bilayer; sequence LLVGQLSVVAVLAFFIKFFIF. Residues 150–454 lie on the Cytoplasmic side of the membrane; it reads GNSSMARPLM…SESETAVDSN (305 aa). One can recognise an SMP-LTD domain in the interval 207-430; it reads QSESLDWFNV…EPRFQLIELP (224 aa).

This sequence belongs to the MMM1 family. As to quaternary structure, homodimer. Component of the ER-mitochondria encounter structure (ERMES) or MDM complex, composed of MMM1, MDM10, MDM12 and MDM34. An MMM1 homodimer associates with one molecule of MDM12 on each side in a pairwise head-to-tail manner, and the SMP-LTD domains of MMM1 and MDM12 generate a continuous hydrophobic tunnel for phospholipid trafficking.

The protein resides in the endoplasmic reticulum membrane. In terms of biological role, component of the ERMES/MDM complex, which serves as a molecular tether to connect the endoplasmic reticulum (ER) and mitochondria. Components of this complex are involved in the control of mitochondrial shape and protein biogenesis, and function in nonvesicular lipid trafficking between the ER and mitochondria. The MDM12-MMM1 subcomplex functions in the major beta-barrel assembly pathway that is responsible for biogenesis of all outer membrane beta-barrel proteins, and acts in a late step after the SAM complex. The MDM10-MDM12-MMM1 subcomplex further acts in the TOM40-specific pathway after the action of the MDM12-MMM1 complex. Essential for establishing and maintaining the structure of mitochondria and maintenance of mtDNA nucleoids. This chain is Maintenance of mitochondrial morphology protein 1, found in Komagataella phaffii (strain GS115 / ATCC 20864) (Yeast).